A 39-amino-acid polypeptide reads, in one-letter code: MALDKTYPIFTVRWLAVHGLAVPTVFFLGSISAMQFIQR.

The chain crosses the membrane as a helical span at residues 14–30 (WLAVHGLAVPTVFFLGS). H18 provides a ligand contact to heme.

It belongs to the PsbE/PsbF family. In terms of assembly, heterodimer of an alpha subunit and a beta subunit. PSII is composed of 1 copy each of membrane proteins PsbA, PsbB, PsbC, PsbD, PsbE, PsbF, PsbH, PsbI, PsbJ, PsbK, PsbL, PsbM, PsbT, PsbX, PsbY, PsbZ, Psb30/Ycf12, at least 3 peripheral proteins of the oxygen-evolving complex and a large number of cofactors. It forms dimeric complexes. It depends on heme b as a cofactor.

Its subcellular location is the plastid. The protein resides in the chloroplast thylakoid membrane. This b-type cytochrome is tightly associated with the reaction center of photosystem II (PSII). PSII is a light-driven water:plastoquinone oxidoreductase that uses light energy to abstract electrons from H(2)O, generating O(2) and a proton gradient subsequently used for ATP formation. It consists of a core antenna complex that captures photons, and an electron transfer chain that converts photonic excitation into a charge separation. The chain is Cytochrome b559 subunit beta from Adiantum capillus-veneris (Maidenhair fern).